The following is a 292-amino-acid chain: Ribosomal protein L11 methyltransferase (292 aa).

Positions 144, 165, 187, and 229 each coordinate S-adenosyl-L-methionine.

It belongs to the methyltransferase superfamily. PrmA family.

Its subcellular location is the cytoplasm. It catalyses the reaction L-lysyl-[protein] + 3 S-adenosyl-L-methionine = N(6),N(6),N(6)-trimethyl-L-lysyl-[protein] + 3 S-adenosyl-L-homocysteine + 3 H(+). In terms of biological role, methylates ribosomal protein L11. The polypeptide is Ribosomal protein L11 methyltransferase (Ectopseudomonas mendocina (strain ymp) (Pseudomonas mendocina)).